The sequence spans 399 residues: Argininosuccinate synthase (399 aa).

9–17 (AYSGGLDTS) lines the ATP pocket. Position 87 (Tyr87) interacts with L-citrulline. Gly117 is an ATP binding site. 3 residues coordinate L-aspartate: Thr119, Asn123, and Asp124. Asn123 is an L-citrulline binding site. Arg127, Ser176, Ser185, Glu261, and Tyr273 together coordinate L-citrulline.

Belongs to the argininosuccinate synthase family. Type 1 subfamily. As to quaternary structure, homotetramer.

The protein localises to the cytoplasm. It catalyses the reaction L-citrulline + L-aspartate + ATP = 2-(N(omega)-L-arginino)succinate + AMP + diphosphate + H(+). Its pathway is amino-acid biosynthesis; L-arginine biosynthesis; L-arginine from L-ornithine and carbamoyl phosphate: step 2/3. The chain is Argininosuccinate synthase from Chlorobium chlorochromatii (strain CaD3).